The primary structure comprises 205 residues: Large ribosomal subunit protein uL4 (205 aa).

The interval 44 to 77 is disordered; it reads KRQGTSKVKNRSAVRGGGKKPWRQKGTGRARQGS. Positions 51–71 are enriched in basic residues; the sequence is VKNRSAVRGGGKKPWRQKGTG.

This sequence belongs to the universal ribosomal protein uL4 family. In terms of assembly, part of the 50S ribosomal subunit.

Functionally, one of the primary rRNA binding proteins, this protein initially binds near the 5'-end of the 23S rRNA. It is important during the early stages of 50S assembly. It makes multiple contacts with different domains of the 23S rRNA in the assembled 50S subunit and ribosome. Forms part of the polypeptide exit tunnel. The chain is Large ribosomal subunit protein uL4 from Lactobacillus delbrueckii subsp. bulgaricus (strain ATCC 11842 / DSM 20081 / BCRC 10696 / JCM 1002 / NBRC 13953 / NCIMB 11778 / NCTC 12712 / WDCM 00102 / Lb 14).